Consider the following 183-residue polypeptide: MSQPAKVLLLYAHPESQDSVANRVLLKPAIQHNNVTVHDLYARYPDFFIDTPYEQALLREHDVIVFQHPLYTYSCPALLKEWLDRVLSRGFASGPGGNQLVGKYWRSVITTGEPESAYRYDALNRYPMSDVLRPFELTAAMCRMHWMPPIIVYWARRQSPQTLASHAKAYGEWLANPVSAGGY.

It belongs to the NAD(P)H dehydrogenase (quinone) family. KefG subfamily. Interacts with KefB.

It is found in the cell inner membrane. The catalysed reaction is a quinone + NADH + H(+) = a quinol + NAD(+). The enzyme catalyses a quinone + NADPH + H(+) = a quinol + NADP(+). In terms of biological role, regulatory subunit of a potassium efflux system that confers protection against electrophiles. Required for full activity of KefB. The sequence is that of Glutathione-regulated potassium-efflux system ancillary protein KefG from Salmonella enteritidis PT4 (strain P125109).